Here is a 219-residue protein sequence, read N- to C-terminus: Small ribosomal subunit protein uS3 (219 aa).

A KH type-2 domain is found at 38–106; it reads IRTYLKKKLY…KLNLEIKEIK (69 aa).

The protein belongs to the universal ribosomal protein uS3 family. In terms of assembly, part of the 30S ribosomal subunit. Forms a tight complex with proteins S10 and S14.

Its function is as follows. Binds the lower part of the 30S subunit head. Binds mRNA in the 70S ribosome, positioning it for translation. In Lachnoclostridium phytofermentans (strain ATCC 700394 / DSM 18823 / ISDg) (Clostridium phytofermentans), this protein is Small ribosomal subunit protein uS3.